The primary structure comprises 93 residues: Large ribosomal subunit protein uL23cy (93 aa).

Belongs to the universal ribosomal protein uL23 family. Part of the 50S ribosomal subunit.

It localises to the plastid. The protein resides in the chloroplast. Its function is as follows. Binds to 23S rRNA. The sequence is that of Large ribosomal subunit protein uL23cy (rpl23-B) from Agrostis stolonifera (Creeping bentgrass).